A 310-amino-acid polypeptide reads, in one-letter code: Ribose-phosphate pyrophosphokinase (310 aa).

Residues 33–35 and 92–93 each bind ATP; these read DGE and RQ. Mg(2+) is bound by residues H127 and D166. K189 is an active-site residue. D-ribose 5-phosphate-binding positions include R191, D215, and 219 to 223; that span reads DTAGT.

Belongs to the ribose-phosphate pyrophosphokinase family. Class I subfamily. Homohexamer. Requires Mg(2+) as cofactor.

It is found in the cytoplasm. It carries out the reaction D-ribose 5-phosphate + ATP = 5-phospho-alpha-D-ribose 1-diphosphate + AMP + H(+). It participates in metabolic intermediate biosynthesis; 5-phospho-alpha-D-ribose 1-diphosphate biosynthesis; 5-phospho-alpha-D-ribose 1-diphosphate from D-ribose 5-phosphate (route I): step 1/1. Functionally, involved in the biosynthesis of the central metabolite phospho-alpha-D-ribosyl-1-pyrophosphate (PRPP) via the transfer of pyrophosphoryl group from ATP to 1-hydroxyl of ribose-5-phosphate (Rib-5-P). The protein is Ribose-phosphate pyrophosphokinase of Bordetella parapertussis (strain 12822 / ATCC BAA-587 / NCTC 13253).